A 545-amino-acid chain; its full sequence is Chaperonin GroEL (545 aa).

Residues 30 to 33 (TLGP), lysine 51, 87 to 91 (DGTTT), glycine 415, 479 to 481 (NAA), and aspartate 495 each bind ATP. Positions 526-545 (KEDKPDLGGAGGMGGMGGMM) are disordered. The segment covering 533–545 (GGAGGMGGMGGMM) has biased composition (gly residues).

Belongs to the chaperonin (HSP60) family. Forms a cylinder of 14 subunits composed of two heptameric rings stacked back-to-back. Interacts with the co-chaperonin GroES.

It localises to the cytoplasm. The catalysed reaction is ATP + H2O + a folded polypeptide = ADP + phosphate + an unfolded polypeptide.. Its function is as follows. Together with its co-chaperonin GroES, plays an essential role in assisting protein folding. The GroEL-GroES system forms a nano-cage that allows encapsulation of the non-native substrate proteins and provides a physical environment optimized to promote and accelerate protein folding. The sequence is that of Chaperonin GroEL from Sodalis glossinidius.